The following is a 317-amino-acid chain: Melanocyte-stimulating hormone receptor (317 aa).

The Extracellular portion of the chain corresponds to 1-37 (MPVQGSQRRLLGSLNSTPTATPRLGLAANQTGARCLE). N29 is a glycosylation site (N-linked (GlcNAc...) asparagine). The helical transmembrane segment at 38–63 (VSIPDGLFLSLGLVSLVENVLVVVAI) threads the bilayer. At 64 to 72 (ARNRNLHSP) the chain is on the cytoplasmic side. Residues 73 to 93 (MYCFICCLALSDLLVSGSNML) traverse the membrane as a helical segment. Topologically, residues 94-118 (ETAVILLLEAGALAARAAVVQQLDN) are extracellular. The helical transmembrane segment at 119-140 (VIDVITCSSMLSSLCFLGAIAV) threads the bilayer. At 141-163 (DRYISIFYALRYHSIVTLRRARR) the chain is on the cytoplasmic side. A helical transmembrane segment spans residues 164–183 (VVAAIWVASVLFSTLFIAYC). The Extracellular portion of the chain corresponds to 184–191 (DHAAVLLS). A helical membrane pass occupies residues 192 to 211 (LVVFFLAMLVLMAVLYVHML). Topologically, residues 212–240 (ARACQHAQGIAQLHKRQRPAHQGVGLKGA) are cytoplasmic. The helical transmembrane segment at 241–266 (ATLTILLGIFFLCWGPFFLHLTLIVL) threads the bilayer. The Extracellular portion of the chain corresponds to 267 to 279 (CPQHPTCSCIFKN). A helical transmembrane segment spans residues 280–300 (FNLFLTLIICNAIIDPLIYAF). Over 301-317 (RSQELRRTLKKVLLCSW) the chain is Cytoplasmic. A lipid anchor (S-palmitoyl cysteine) is attached at C315.

This sequence belongs to the G-protein coupled receptor 1 family. In terms of assembly, interacts with MGRN1, but does not undergo MGRN1-mediated ubiquitination; this interaction competes with GNAS-binding and thus inhibits agonist-induced cAMP production. Interacts with OPN3; the interaction results in a decrease in MC1R-mediated cAMP signaling and ultimately a decrease in melanin production in melanocytes.

The protein resides in the cell membrane. In terms of biological role, receptor for MSH (alpha, beta and gamma) and ACTH. The activity of this receptor is mediated by G proteins which activate adenylate cyclase. Mediates melanogenesis, the production of eumelanin (black/brown) and phaeomelanin (red/yellow), via regulation of cAMP signaling in melanocytes. This chain is Melanocyte-stimulating hormone receptor (MC1R), found in Trachypithecus auratus (Javan langur).